A 124-amino-acid polypeptide reads, in one-letter code: MATINQLVRKPRVKKVVKSNVPALEACPQKRGVCTRVYTTTPKKPNSALRKVCRIRLTNGFEVTSYIGGEGHNLQEHSVVLIRGGRVKDLPGVRYHTVRGALDCAGVKDRKQGRSKYGVKRPKS.

At Asp89 the chain carries 3-methylthioaspartic acid.

This sequence belongs to the universal ribosomal protein uS12 family. In terms of assembly, part of the 30S ribosomal subunit. Contacts proteins S8 and S17. May interact with IF1 in the 30S initiation complex.

With S4 and S5 plays an important role in translational accuracy. In terms of biological role, interacts with and stabilizes bases of the 16S rRNA that are involved in tRNA selection in the A site and with the mRNA backbone. Located at the interface of the 30S and 50S subunits, it traverses the body of the 30S subunit contacting proteins on the other side and probably holding the rRNA structure together. The combined cluster of proteins S8, S12 and S17 appears to hold together the shoulder and platform of the 30S subunit. In Glaesserella parasuis serovar 5 (strain SH0165) (Haemophilus parasuis), this protein is Small ribosomal subunit protein uS12.